A 479-amino-acid chain; its full sequence is U2 small nuclear ribonucleoprotein auxiliary factor 35 kDa subunit-related protein 1 (479 aa).

Positions M1 to L63 are disordered. Basic residues predominate over residues S20–R37. Over residues Q50–L63 the composition is skewed to acidic residues. Residue K67 forms a Glycyl lysine isopeptide (Lys-Gly) (interchain with G-Cter in SUMO2) linkage. The C3H1-type 1 zinc-finger motif lies at E171–P199. The RRM domain maps to P203 to V309. The C3H1-type 2 zinc finger occupies R311–R338. Phosphoserine is present on S354. The tract at residues D356–K479 is disordered. 2 stretches are compositionally biased toward basic and acidic residues: residues N365–Y379 and P388–K403. Position 389 is a phosphoserine (S389). 2 stretches are compositionally biased toward basic residues: residues K404–S417 and S442–R451.

It is found in the nucleus. This is U2 small nuclear ribonucleoprotein auxiliary factor 35 kDa subunit-related protein 1 from Homo sapiens (Human).